The following is a 153-amino-acid chain: Pheromone-binding protein Gp-9 (153 aa).

Residues 1–19 (MKTFVLHIFIFALVAFASA) form the signal peptide. 3 cysteine pairs are disulfide-bonded: C37/C77, C73/C129, and C118/C138.

It belongs to the PBP/GOBP family. Homodimer.

It is found in the secreted. Colony queen number, a major feature of social organization, is associated with worker genotype for Gp-9. Colonies are headed by either a single reproductive queen (monogyne form) or multiple queens (polygyne form). Differences in worker Gp-9 genotypes between social forms may cause differences in workers' abilities to recognize queens and regulate their numbers. The protein is Pheromone-binding protein Gp-9 of Solenopsis richteri (Black imported fire ant).